Reading from the N-terminus, the 137-residue chain is Putative pre-16S rRNA nuclease (137 aa).

It belongs to the YqgF nuclease family.

The protein resides in the cytoplasm. In terms of biological role, could be a nuclease involved in processing of the 5'-end of pre-16S rRNA. This is Putative pre-16S rRNA nuclease from Bacillus mycoides (strain KBAB4) (Bacillus weihenstephanensis).